We begin with the raw amino-acid sequence, 256 residues long: 5'-nucleotidase SurE (256 aa).

Positions 13, 14, 44, and 101 each coordinate a divalent metal cation.

Belongs to the SurE nucleotidase family. Requires a divalent metal cation as cofactor.

Its subcellular location is the cytoplasm. The enzyme catalyses a ribonucleoside 5'-phosphate + H2O = a ribonucleoside + phosphate. Functionally, nucleotidase that shows phosphatase activity on nucleoside 5'-monophosphates. In Porphyromonas gingivalis (strain ATCC 33277 / DSM 20709 / CIP 103683 / JCM 12257 / NCTC 11834 / 2561), this protein is 5'-nucleotidase SurE.